The chain runs to 505 residues: L-carnitine/gamma-butyrobetaine antiporter (505 aa).

A run of 12 helical transmembrane segments spans residues 10 to 30 (IEPK…WLTV), 50 to 70 (IWGW…FWLV), 92 to 112 (IFMM…SIEI), 143 to 163 (GPLP…FFFV), 195 to 215 (FYLV…TPLV), 231 to 251 (LDAI…ACGL), 263 to 283 (SYLS…SFIM), 316 to 336 (WTVF…IFLA), 347 to 367 (LCFG…TVLG), 403 to 423 (FSTA…VTLI), 446 to 466 (LLVR…LLAL), and 475 to 495 (AIIA…LSFI).

The protein belongs to the BCCT transporter (TC 2.A.15) family. CaiT subfamily. As to quaternary structure, homotrimer.

The protein resides in the cell inner membrane. It carries out the reaction 4-(trimethylamino)butanoate(in) + (R)-carnitine(out) = 4-(trimethylamino)butanoate(out) + (R)-carnitine(in). It participates in amine and polyamine metabolism; carnitine metabolism. Functionally, catalyzes the exchange of L-carnitine for gamma-butyrobetaine. The polypeptide is L-carnitine/gamma-butyrobetaine antiporter (Citrobacter koseri (strain ATCC BAA-895 / CDC 4225-83 / SGSC4696)).